Consider the following 72-residue polypeptide: Protein RALF-like 12 (72 aa).

The signal sequence occupies residues 1–17; sequence MKAWVIGLLVICAVVIA. Cystine bridges form between Cys-34-Cys-43 and Cys-63-Cys-69. The tract at residues 37 to 60 is disordered; sequence PNPPPGCNPPGTEQKNPTPVNEYS.

It belongs to the plant rapid alkalinization factor (RALF) family.

Its subcellular location is the secreted. In terms of biological role, cell signaling peptide that may regulate plant stress, growth, and development. Mediates a rapid alkalinization of extracellular space by mediating a transient increase in the cytoplasmic Ca(2+) concentration leading to a calcium-dependent signaling events through a cell surface receptor and a concomitant activation of some intracellular mitogen-activated protein kinases. The chain is Protein RALF-like 12 (RALFL12) from Arabidopsis thaliana (Mouse-ear cress).